The following is a 565-amino-acid chain: SRSF protein kinase 3 (565 aa).

Positions 1–44 (MSANAGGSGSVDCGGSSSSSQTSCGPESSGSELTPATPAPRLLQ) are disordered. A compositionally biased stretch (low complexity) spans 10 to 31 (SVDCGGSSSSSQTSCGPESSGS). Position 49 is a phosphoserine (S49). The 486-residue stretch at 78-563 (YHVVRKLGWG…AADCLQHPWL (486 aa)) folds into the Protein kinase domain. Residues 84–92 (LGWGHFSTV) and K107 each bind ATP. D211 serves as the catalytic Proton acceptor. Over residues 236 to 253 (WQQSGAQPPSRSTVSTAP) the composition is skewed to polar residues. 2 disordered regions span residues 236–280 (WQQS…KRLL) and 295–350 (AAVQ…QTSG). Residues 262-277 (SKNKRKKMRRKRKQQK) are compositionally biased toward basic residues. The span at 325-350 (AGPSPASSSPVPGGERSLSPSSQTSG) shows a compositional bias: low complexity. S328 carries the phosphoserine modification.

It belongs to the protein kinase superfamily. CMGC Ser/Thr protein kinase family. In terms of tissue distribution, exclusively expressed in skeletal and heart muscle.

Its subcellular location is the nucleus. The protein localises to the cytoplasm. The catalysed reaction is L-seryl-[protein] + ATP = O-phospho-L-seryl-[protein] + ADP + H(+). It carries out the reaction L-threonyl-[protein] + ATP = O-phospho-L-threonyl-[protein] + ADP + H(+). Its function is as follows. Serine/arginine-rich protein-specific kinase which specifically phosphorylates its substrates at serine residues located in regions rich in arginine/serine dipeptides, known as RS domains. Phosphorylates the SR splicing factor SRSF1 and the lamin-B receptor (LBR) in vitro. Required for normal muscle development. The protein is SRSF protein kinase 3 (Srpk3) of Mus musculus (Mouse).